Here is a 425-residue protein sequence, read N- to C-terminus: Receptor-like protein 55 (425 aa).

Positions 1–25 (MKPQQPQPPLLLLLLLPLLLTTVSS) are cleaved as a signal peptide. Over 26 to 397 (YPLNPKQLKA…EEEHKGSNKT (372 aa)) the chain is Extracellular. N-linked (GlcNAc...) asparagine glycosylation is found at Asn-40, Asn-54, Asn-79, and Asn-132. LRR repeat units lie at residues 144 to 169 (LKNL…ILGN), 170 to 193 (MHKL…SFHS), 195 to 216 (LRYI…ITRL), 217 to 240 (KNLK…IKSL), 242 to 264 (FLKN…LSSI), 265 to 287 (SELT…FFSE), and 288 to 313 (MKNL…SFIK). N-linked (GlcNAc...) asparagine glycosylation is found at Asn-182, Asn-202, Asn-223, Asn-245, Asn-278, Asn-308, and Asn-329. A disordered region spans residues 355–389 (PSQKEESLSGENDYDVEGGNEEKTENLKTKEEEEE). A compositionally biased stretch (basic and acidic residues) spans 374–389 (NEEKTENLKTKEEEEE). Asn-395 is a glycosylation site (N-linked (GlcNAc...) asparagine). A helical membrane pass occupies residues 398–418 (LFGLGIGLFSLVFLILFLFYL). The Cytoplasmic portion of the chain corresponds to 419–425 (AKRCRLI).

This sequence belongs to the RLP family.

The protein resides in the cell membrane. In terms of biological role, involved in plant defense. In Arabidopsis thaliana (Mouse-ear cress), this protein is Receptor-like protein 55.